A 705-amino-acid polypeptide reads, in one-letter code: Dolichyl-diphosphooligosaccharide--protein glycosyltransferase subunit STT3A (705 aa).

Topologically, residues 1–17 (MTKLGFLRLSYEKQDTL) are cytoplasmic. Residues 18-38 (LKLLILSMAAVLSFSTRLFAV) form a helical membrane-spanning segment. Topologically, residues 39-119 (LRFESVIHEF…IDIRNVCVFL (81 aa)) are lumenal. Residues 47-49 (EFD) carry the DXD motif 1 motif. A Mn(2+)-binding site is contributed by Asp49. A helical transmembrane segment spans residues 120–138 (APLFSSFTTIVTYHLTKEL). At 139 to 140 (KD) the chain is on the cytoplasmic side. Residues 141–158 (AGAGLLAAAMIAVVPGYI) traverse the membrane as a helical segment. Over 159–169 (SRSVAGSYDNE) the chain is Lumenal. Mn(2+) contacts are provided by Asp167 and Glu169. The DXD motif 2 signature appears at 167 to 169 (DNE). The helical transmembrane segment at 170-189 (GIAIFCMLLTYYMWIKAVKT) threads the bilayer. The Cytoplasmic segment spans residues 190 to 191 (GS). Residues 192–206 (IYWAAKCALAYFYMV) traverse the membrane as a helical segment. Residues 207-211 (SSWGG) are Lumenal-facing. The helical transmembrane segment at 212-228 (YVFLINLIPLHVLVLML) threads the bilayer. Residues 229–233 (TGRFS) lie on the Cytoplasmic side of the membrane. Residues 234–259 (HRIYVAYCTVYCLGTILSMQISFVGF) traverse the membrane as a helical segment. The Lumenal segment spans residues 260 to 267 (QPVLSSEH). A helical transmembrane segment spans residues 268-287 (MAAFGVFGLCQIHAFVDYLR). Residues 288–300 (SKLNPQQFEVLFR) are Cytoplasmic-facing. A helical transmembrane segment spans residues 301-321 (SVISLVGFVLLTIGALLMLTG). Topologically, residues 322–356 (KISPWTGRFYSLLDPSYAKNNIPIIASVSEHQPTT) are lumenal. Residues 348-351 (SVSE) carry the SVSE motif motif. A helical transmembrane segment spans residues 357 to 379 (WSSYYFDLQLLVFMFPVGLYYCF). Residues 380–385 (SNLSDA) lie on the Cytoplasmic side of the membrane. The helical transmembrane segment at 386–402 (RIFIIMYGVTSMYFSAV) threads the bilayer. Residues 403 to 406 (MVRL) are Lumenal-facing. Residue Arg405 coordinates dolichyl diphosphooligosaccharide. Residues 407–428 (MLVLAPVMCILSGIGVSQVLST) form a helical membrane-spanning segment. The Cytoplasmic segment spans residues 429-453 (YMKNLDISRQDKKSKKQQDSTYPIK). A helical transmembrane segment spans residues 454 to 473 (NEVASGMILVMAFFLITYTF). Residues 474–705 (HSTWVTSEAY…DLDNRGLSRT (232 aa)) are Lumenal-facing. Residues 525–527 (WWD) are interacts with target acceptor peptide in protein substrate. Residues 525-529 (WWDYG) carry the WWDYG motif motif. Tyr530 provides a ligand contact to dolichyl diphosphooligosaccharide. Asn537 and Asn544 each carry an N-linked (GlcNAc...) asparagine glycan. Asn548 carries an N-linked (GlcNAc...) (high mannose) asparagine glycan. Residues 592 to 599 (DINKFLWM) carry the DK motif motif.

Belongs to the STT3 family. As to quaternary structure, component of the oligosaccharyltransferase (OST) complex. There are 2 OST complexes, OST-A and OST-B, which contain STT3A or STT3B as catalytic subunit, respectively. OST-A and OST-B contain common core subunits RPN1, RPN2, OST48, OST4, DAD1 and TMEM258, and OST-A contains DC2/OSTC and KRTCAP2/KCP2 specific accessory subunits. OST-A complex assembly occurs through the formation of 3 subcomplexes. Subcomplex 1 contains RPN1 and TMEM258, subcomplex 2 contains the OST-A-specific subunits STT3A, DC2/OSTC, and KCP2 as well as the core subunit OST4, and subcomplex 3 contains RPN2, DAD1, and OST48. The OST-A complex can form stable complexes with the Sec61 complex or with both the Sec61 and TRAP complexes. It depends on Mg(2+) as a cofactor. The cofactor is Mn(2+).

The protein resides in the endoplasmic reticulum membrane. It carries out the reaction a di-trans,poly-cis-dolichyl diphosphooligosaccharide + L-asparaginyl-[protein] = N(4)-(oligosaccharide-(1-&gt;4)-N-acetyl-beta-D-glucosaminyl-(1-&gt;4)-N-acetyl-beta-D-glucosaminyl)-L-asparaginyl-[protein] + a di-trans,poly-cis-dolichyl diphosphate + H(+). It participates in protein modification; protein glycosylation. In terms of biological role, catalytic subunit of the oligosaccharyl transferase (OST) complex that catalyzes the initial transfer of a defined glycan (Glc(3)Man(9)GlcNAc(2) in eukaryotes) from the lipid carrier dolichol-pyrophosphate to an asparagine residue within an Asn-X-Ser/Thr consensus motif in nascent polypeptide chains, the first step in protein N-glycosylation. N-glycosylation occurs cotranslationally and the complex associates with the Sec61 complex at the channel-forming translocon complex that mediates protein translocation across the endoplasmic reticulum (ER). All subunits are required for a maximal enzyme activity. This subunit contains the active site and the acceptor peptide and donor lipid-linked oligosaccharide (LLO) binding pockets. STT3A is present in the majority of OST complexes and mediates cotranslational N-glycosylation of most sites on target proteins, while STT3B-containing complexes are required for efficient post-translational glycosylation and mediate glycosylation of sites that have been skipped by STT3A. STT3A-containing OST-A complex is also required to prevent hyperglycosylation of some target proteins by preventing glycosylation of facultative sites before folding of target proteins is completed. This Bos taurus (Bovine) protein is Dolichyl-diphosphooligosaccharide--protein glycosyltransferase subunit STT3A.